The chain runs to 438 residues: Coenzyme A disulfide reductase (438 aa).

8–33 (GAVAGGATCASQIRRLDKESDIIIFE) serves as a coordination point for FAD. The substrate site is built by Thr15, Gln19, Arg22, Ser39, and Asn42. The active-site Nucleophile is Cys43. The Redox-active role is filled by Cys43. Lys71 provides a ligand contact to substrate. NADP(+) is bound at residue 151–166 (VLVIGAGYVSLEVLEN). 267–277 (TNVPNIYAIGD) is an FAD binding site. A substrate-binding site is contributed by His299. Tyr419 is an FAD binding site. Substrate is bound at residue Lys427.

Belongs to the class-III pyridine nucleotide-disulfide oxidoreductase family. In terms of assembly, homodimer. Requires FAD as cofactor.

It catalyses the reaction NADP(+) + 2 CoA = CoA-disulfide + NADPH + H(+). Its function is as follows. Catalyzes specifically the NADPH-dependent reduction of coenzyme A disulfide. The sequence is that of Coenzyme A disulfide reductase from Staphylococcus aureus (strain Mu3 / ATCC 700698).